The primary structure comprises 883 residues: Alanine--tRNA ligase (883 aa).

Positions 560, 564, 665, and 669 each coordinate Zn(2+).

The protein belongs to the class-II aminoacyl-tRNA synthetase family. The cofactor is Zn(2+).

Its subcellular location is the cytoplasm. It carries out the reaction tRNA(Ala) + L-alanine + ATP = L-alanyl-tRNA(Ala) + AMP + diphosphate. In terms of biological role, catalyzes the attachment of alanine to tRNA(Ala) in a two-step reaction: alanine is first activated by ATP to form Ala-AMP and then transferred to the acceptor end of tRNA(Ala). Also edits incorrectly charged Ser-tRNA(Ala) and Gly-tRNA(Ala) via its editing domain. This is Alanine--tRNA ligase from Mesomycoplasma hyopneumoniae (strain 7448) (Mycoplasma hyopneumoniae).